Consider the following 301-residue polypeptide: D-alanine--D-alanine ligase (301 aa).

The 196-residue stretch at 99–294 (KCILKAANIR…FSELIDMIID (196 aa)) folds into the ATP-grasp domain. Position 126-181 (126-181 (IEGMGYPVVVKPTHGGSSVATFIIKEEKDIKNAVTEAFKWDSEVIIEKFIKGDEIT)) interacts with ATP. Positions 248, 261, and 263 each coordinate Mg(2+).

This sequence belongs to the D-alanine--D-alanine ligase family. Requires Mg(2+) as cofactor. It depends on Mn(2+) as a cofactor.

It is found in the cytoplasm. It carries out the reaction 2 D-alanine + ATP = D-alanyl-D-alanine + ADP + phosphate + H(+). Its pathway is cell wall biogenesis; peptidoglycan biosynthesis. In terms of biological role, cell wall formation. The polypeptide is D-alanine--D-alanine ligase (Clostridium botulinum (strain Eklund 17B / Type B)).